The chain runs to 217 residues: Ras-related protein RGP2 (217 aa).

Residues 19–26, 67–71, and 125–128 each bind GTP; these read GDSGVGKS, DTAGQ, and NKSD. Residues Cys-214 and Cys-215 are each lipidated (S-geranylgeranyl cysteine).

It belongs to the small GTPase superfamily. Rab family.

The protein localises to the cell membrane. The chain is Ras-related protein RGP2 (RGP2) from Oryza sativa subsp. japonica (Rice).